The primary structure comprises 366 residues: Aminomethyltransferase (366 aa).

Belongs to the GcvT family. As to quaternary structure, the glycine cleavage system is composed of four proteins: P, T, L and H.

It carries out the reaction N(6)-[(R)-S(8)-aminomethyldihydrolipoyl]-L-lysyl-[protein] + (6S)-5,6,7,8-tetrahydrofolate = N(6)-[(R)-dihydrolipoyl]-L-lysyl-[protein] + (6R)-5,10-methylene-5,6,7,8-tetrahydrofolate + NH4(+). Its function is as follows. The glycine cleavage system catalyzes the degradation of glycine. This chain is Aminomethyltransferase, found in Bacillus cereus (strain B4264).